Consider the following 710-residue polypeptide: Polyribonucleotide nucleotidyltransferase (710 aa).

Positions 491 and 497 each coordinate Mg(2+). A KH domain is found at Pro559–Ile618. Residues Gly628 to Lys696 form the S1 motif domain.

This sequence belongs to the polyribonucleotide nucleotidyltransferase family. The cofactor is Mg(2+).

The protein localises to the cytoplasm. It catalyses the reaction RNA(n+1) + phosphate = RNA(n) + a ribonucleoside 5'-diphosphate. Functionally, involved in mRNA degradation. Catalyzes the phosphorolysis of single-stranded polyribonucleotides processively in the 3'- to 5'-direction. The protein is Polyribonucleotide nucleotidyltransferase of Herminiimonas arsenicoxydans.